The sequence spans 677 residues: UPF0313 protein RPA0679 (677 aa).

Residues 335–601 form the Radical SAM core domain; that stretch reads AWDMIKTSVT…VEAIKGLRQR (267 aa). [4Fe-4S] cluster-binding residues include C349, C353, and C356. The tract at residues 635–677 is disordered; that stretch reads RPDQLVPAHQPPGTGKAAGTRRPVRGDGPKPQRFTTKGVRLVK.

This sequence belongs to the UPF0313 family. The cofactor is [4Fe-4S] cluster.

The polypeptide is UPF0313 protein RPA0679 (Rhodopseudomonas palustris (strain ATCC BAA-98 / CGA009)).